The primary structure comprises 43 residues: Photosystem II reaction center protein K (43 aa).

The propeptide occupies 1–6 (MSLLLA). The helical transmembrane segment at 18 to 38 (IVDVLPIIPVLFLLLAFVWQA) threads the bilayer.

This sequence belongs to the PsbK family. PSII is composed of 1 copy each of membrane proteins PsbA, PsbB, PsbC, PsbD, PsbE, PsbF, PsbH, PsbI, PsbJ, PsbK, PsbL, PsbM, PsbT, PsbX, PsbY, PsbZ, Psb30/Ycf12, at least 3 peripheral proteins of the oxygen-evolving complex and a large number of cofactors. It forms dimeric complexes.

It is found in the plastid. The protein resides in the chloroplast thylakoid membrane. Functionally, one of the components of the core complex of photosystem II (PSII). PSII is a light-driven water:plastoquinone oxidoreductase that uses light energy to abstract electrons from H(2)O, generating O(2) and a proton gradient subsequently used for ATP formation. It consists of a core antenna complex that captures photons, and an electron transfer chain that converts photonic excitation into a charge separation. In Oltmannsiellopsis viridis (Marine flagellate), this protein is Photosystem II reaction center protein K.